We begin with the raw amino-acid sequence, 194 residues long: Peptidyl-tRNA hydrolase (194 aa).

TRNA is bound at residue Tyr-16. The Proton acceptor role is filled by His-21. The tRNA site is built by Phe-67, Asn-69, and Asn-115.

The protein belongs to the PTH family. In terms of assembly, monomer.

It is found in the cytoplasm. It carries out the reaction an N-acyl-L-alpha-aminoacyl-tRNA + H2O = an N-acyl-L-amino acid + a tRNA + H(+). Functionally, hydrolyzes ribosome-free peptidyl-tRNAs (with 1 or more amino acids incorporated), which drop off the ribosome during protein synthesis, or as a result of ribosome stalling. Catalyzes the release of premature peptidyl moieties from peptidyl-tRNA molecules trapped in stalled 50S ribosomal subunits, and thus maintains levels of free tRNAs and 50S ribosomes. In Salmonella heidelberg (strain SL476), this protein is Peptidyl-tRNA hydrolase.